Reading from the N-terminus, the 94-residue chain is Large ribosomal subunit protein uL23 (94 aa).

Belongs to the universal ribosomal protein uL23 family. As to quaternary structure, part of the 50S ribosomal subunit. Contacts protein L29, and trigger factor when it is bound to the ribosome.

One of the early assembly proteins it binds 23S rRNA. One of the proteins that surrounds the polypeptide exit tunnel on the outside of the ribosome. Forms the main docking site for trigger factor binding to the ribosome. The protein is Large ribosomal subunit protein uL23 of Listeria innocua serovar 6a (strain ATCC BAA-680 / CLIP 11262).